Reading from the N-terminus, the 75-residue chain is uncharacterized protein (75 aa).

The helical transmembrane segment at 7 to 26 (ATAPLFVIVGLAVVLTGATG) threads the bilayer.

It is found in the membrane. This is an uncharacterized protein from Dictyostelium discoideum (Social amoeba).